The primary structure comprises 78 residues: Gas vesicle protein A (78 aa).

This sequence belongs to the gas vesicle GvpA family. In terms of assembly, the gas vesicle shell is 2 nm thick and consists of a single layer of this protein. It forms helical ribs nearly perpendicular to the long axis of the vesicle.

It is found in the gas vesicle shell. In terms of biological role, gas vesicles are hollow, gas filled proteinaceous nanostructures found in some microorganisms. During planktonic growth they allow positioning of the organism at a favorable depth for light or nutrient acquisition. GvpA forms the protein shell. The protein is Gas vesicle protein A of Halorubrum vacuolatum (Natronobacterium vacuolatum).